We begin with the raw amino-acid sequence, 530 residues long: Estrogen receptor beta (530 aa).

Residues 1–148 (MEIKNSPSSL…SPNAKRDAHF (148 aa)) form a modulating region. Residue serine 61 is modified to Phosphoserine; alternate. Serine 61 carries O-linked (GlcNAc) serine; alternate glycosylation. Phosphoserine; by MAPK is present on residues serine 87 and serine 105. 2 consecutive NR C4-type zinc fingers follow at residues 149–169 (CPVC…CEGC) and 185–209 (CPAT…LRKC). The nuclear receptor DNA-binding region spans 149–214 (CPVCSDYASG…RLRKCYEVGM (66 aa)). The NR LBD domain maps to 264 to 498 (SPEQLVLTLL…DLLLEMLNAH (235 aa)). Low complexity predominate over residues 506–515 (SISGSECSST). The disordered stretch occupies residues 506–530 (SISGSECSSTEDSKNKESSQNLQSQ).

Belongs to the nuclear hormone receptor family. NR3 subfamily. As to quaternary structure, binds DNA as a homodimer. Can form a heterodimer with ESR1. Interacts with NCOA1, NCOA3, NCOA5 and NCOA6 coactivators, leading to a strong increase of transcription of target genes. Interacts with UBE1C and AKAP13. Interacts with DNTTIP2. Interacts with CCDC62 in the presence of estradiol/E2; this interaction seems to enhance the transcription of target genes. Interacts with PRMT2. Interacts with CCAR2 (via N-terminus) in a ligand-independent manner. Interacts with DNAAF4. Interacts with RBM39, in the presence of estradiol (E2). Interacts with STUB1/CHIP. In terms of processing, phosphorylation at Ser-87 and Ser-105 recruits NCOA1. As to expression, expressed in the CA1 region of the hippocampus, expression decreases with age (at protein level). Expressed in prostate, ovary, lung, liver, kidney, fat, bone, brain, uterus and testis.

Its subcellular location is the nucleus. Functionally, nuclear hormone receptor. Binds estrogens with an affinity similar to that of ESR1/ER-alpha, and activates expression of reporter genes containing estrogen response elements (ERE) in an estrogen-dependent manner. Lacks ligand binding affinity and suppresses ESR1/ER-alpha and ESR2 isoform 1/ER-beta1 mediated transcriptional activation and may act as a dominant negative regulator of estrogen action. In terms of biological role, unable to bind DNA and activate transcription due to the truncation of the DNA binding domain. The polypeptide is Estrogen receptor beta (Esr2) (Rattus norvegicus (Rat)).